A 226-amino-acid chain; its full sequence is Enolase-phosphatase E1 (226 aa).

Belongs to the HAD-like hydrolase superfamily. MasA/MtnC family. In terms of assembly, monomer. It depends on Mg(2+) as a cofactor.

It catalyses the reaction 5-methylsulfanyl-2,3-dioxopentyl phosphate + H2O = 1,2-dihydroxy-5-(methylsulfanyl)pent-1-en-3-one + phosphate. Its pathway is amino-acid biosynthesis; L-methionine biosynthesis via salvage pathway; L-methionine from S-methyl-5-thio-alpha-D-ribose 1-phosphate: step 3/6. The protein operates within amino-acid biosynthesis; L-methionine biosynthesis via salvage pathway; L-methionine from S-methyl-5-thio-alpha-D-ribose 1-phosphate: step 4/6. Bifunctional enzyme that catalyzes the enolization of 2,3-diketo-5-methylthiopentyl-1-phosphate (DK-MTP-1-P) into the intermediate 2-hydroxy-3-keto-5-methylthiopentenyl-1-phosphate (HK-MTPenyl-1-P), which is then dephosphorylated to form the acireductone 1,2-dihydroxy-3-keto-5-methylthiopentene (DHK-MTPene). The polypeptide is Enolase-phosphatase E1 (Shewanella sp. (strain MR-4)).